We begin with the raw amino-acid sequence, 176 residues long: DELTA-stichotoxin-She4a (176 aa).

The plays an important role in the hemolytic activity stretch occupies residues 2 to 11 (ELAGTIIDGA). The interval 10–29 (GASLTFEVLDKVLGELGKVS) is N-terminal region. Residues S53, V86, S104, P106, Y132, Y136, and Y137 each contribute to the phosphocholine site. Residues 104-119 (SVPFDYNWYSNWWDVK) form a trp-rich region, which is important for the binding to lipid membrane region. A Cell attachment site motif is present at residues 142–144 (RGD).

As to quaternary structure, octamer or nonamer in membranes. Monomer in the soluble state.

Its subcellular location is the secreted. It is found in the nematocyst. The protein localises to the target cell membrane. In terms of biological role, pore-forming protein that forms cations-selective hydrophilic pores of around 1 nm and causes cardiac stimulation and cytolysis. Pore formation is a multi-step process that involves specific recognition of membrane sphingomyelin (but neither cholesterol nor phosphatidylcholine) using aromatic rich region and adjacent phosphocholine (POC) binding site, firm binding to the membrane (mainly driven by hydrophobic interactions) accompanied by the transfer of the N-terminal region to the lipid-water interface and finally pore formation after oligomerization of monomers. Cytolytic effects include red blood cells hemolysis, platelet aggregation and lysis, cytotoxic and cytostatic effects on fibroblasts. Lethality in mammals has been ascribed to severe vasospasm of coronary vessels, cardiac arrhythmia, and inotropic effects. This chain is DELTA-stichotoxin-She4a, found in Stichodactyla helianthus (Sun anemone).